The chain runs to 572 residues: Phosphoenolpyruvate-protein phosphotransferase (572 aa).

H190 functions as the Tele-phosphohistidine intermediate in the catalytic mechanism. Phosphoenolpyruvate contacts are provided by R297 and R333. E427 and D451 together coordinate Mg(2+). Residues 450–451 and R461 each bind phosphoenolpyruvate; that span reads ND. C498 acts as the Proton donor in catalysis.

It belongs to the PEP-utilizing enzyme family. As to quaternary structure, homodimer. Mg(2+) serves as cofactor.

The protein resides in the cytoplasm. The catalysed reaction is L-histidyl-[protein] + phosphoenolpyruvate = N(pros)-phospho-L-histidyl-[protein] + pyruvate. In terms of biological role, general (non sugar-specific) component of the phosphoenolpyruvate-dependent sugar phosphotransferase system (sugar PTS). This major carbohydrate active-transport system catalyzes the phosphorylation of incoming sugar substrates concomitantly with their translocation across the cell membrane. Enzyme I transfers the phosphoryl group from phosphoenolpyruvate (PEP) to the phosphoryl carrier protein (HPr). The polypeptide is Phosphoenolpyruvate-protein phosphotransferase (ptsI) (Mycoplasma pneumoniae (strain ATCC 29342 / M129 / Subtype 1) (Mycoplasmoides pneumoniae)).